The chain runs to 819 residues: THO complex subunit 5B (819 aa).

The segment at 285-332 is disordered; it reads ARQQSRKDSGMSSNTESSRLEDDGPDDDDDGQRRRKRPKKLTSKEGSD.

It belongs to the THOC5 family. In terms of assembly, component of the THO complex, which is composed of THO1, THO2, THO3, THO5, THO6 and THO7.

It localises to the nucleus. Acts as a component of the THO subcomplex of the TREX complex which is thought to couple mRNA transcription, processing and nuclear export. This chain is THO complex subunit 5B (THO5B), found in Arabidopsis thaliana (Mouse-ear cress).